The chain runs to 285 residues: NADPH-dependent 7-cyano-7-deazaguanine reductase (285 aa).

80–82 (VES) is a substrate binding site. Position 82–83 (82–83 (SK)) interacts with NADPH. Residue Cys191 is the Thioimide intermediate of the active site. Asp198 acts as the Proton donor in catalysis. 231–232 (HE) is a binding site for substrate. 260-261 (RG) lines the NADPH pocket.

It belongs to the GTP cyclohydrolase I family. QueF type 2 subfamily. As to quaternary structure, homodimer.

The protein resides in the cytoplasm. The catalysed reaction is 7-aminomethyl-7-carbaguanine + 2 NADP(+) = 7-cyano-7-deazaguanine + 2 NADPH + 3 H(+). Its pathway is tRNA modification; tRNA-queuosine biosynthesis. Catalyzes the NADPH-dependent reduction of 7-cyano-7-deazaguanine (preQ0) to 7-aminomethyl-7-deazaguanine (preQ1). The protein is NADPH-dependent 7-cyano-7-deazaguanine reductase of Psychrobacter cryohalolentis (strain ATCC BAA-1226 / DSM 17306 / VKM B-2378 / K5).